A 100-amino-acid chain; its full sequence is Large ribosomal subunit protein uL23 (100 aa).

This sequence belongs to the universal ribosomal protein uL23 family. As to quaternary structure, part of the 50S ribosomal subunit. Contacts protein L29, and trigger factor when it is bound to the ribosome.

Its function is as follows. One of the early assembly proteins it binds 23S rRNA. One of the proteins that surrounds the polypeptide exit tunnel on the outside of the ribosome. Forms the main docking site for trigger factor binding to the ribosome. The polypeptide is Large ribosomal subunit protein uL23 (Aliivibrio fischeri (strain MJ11) (Vibrio fischeri)).